The sequence spans 184 residues: Peptide deformylase (184 aa).

Fe cation is bound by residues cysteine 92 and histidine 134. Glutamate 135 is a catalytic residue. Histidine 138 is a Fe cation binding site.

It belongs to the polypeptide deformylase family. Fe(2+) is required as a cofactor.

It carries out the reaction N-terminal N-formyl-L-methionyl-[peptide] + H2O = N-terminal L-methionyl-[peptide] + formate. Its function is as follows. Removes the formyl group from the N-terminal Met of newly synthesized proteins. Requires at least a dipeptide for an efficient rate of reaction. N-terminal L-methionine is a prerequisite for activity but the enzyme has broad specificity at other positions. The chain is Peptide deformylase from Psychrobacter arcticus (strain DSM 17307 / VKM B-2377 / 273-4).